The chain runs to 471 residues: Putative multidrug resistance protein MdtD (471 aa).

Topologically, residues 1 to 11 (MTDLPDSTRWQ) are periplasmic. The helical transmembrane segment at 12 to 32 (LWIVAFGFFMQSLDTTIVNTA) threads the bilayer. Over 33 to 48 (LPSMAQSLGESPLHMH) the chain is Cytoplasmic. A helical membrane pass occupies residues 49 to 69 (MVIVSYVLTVAVMLPASGWLA). At 70-76 (DKVGVRN) the chain is on the periplasmic side. A helical transmembrane segment spans residues 77–97 (IFFTAIVLFTLGSLFCALSGT). Topologically, residues 98–101 (LNEL) are cytoplasmic. Residues 102–124 (LLARALQGVGGAMMVPVGRLTVM) form a helical membrane-spanning segment. Residues 125–137 (KIVPREQYMAAMT) lie on the Periplasmic side of the membrane. Residues 138–158 (FVTLPGQVGPLLGPALGGLLV) traverse the membrane as a helical segment. At 159–164 (EYASWH) the chain is on the cytoplasmic side. A helical transmembrane segment spans residues 165-185 (WIFLINIPVGIIGAIATLMLM). Over 186–196 (PNYTMQTRRFD) the chain is Periplasmic. Residues 197–217 (LSGFLLLAVGMAVLTLALDGS) form a helical membrane-spanning segment. The Cytoplasmic portion of the chain corresponds to 218–224 (KGTGLSP). Residues 225 to 245 (LAITGLVAVGVVALVLYLLHA) traverse the membrane as a helical segment. Residues 246 to 262 (RNNNRALFSLKLFRTRT) are Periplasmic-facing. A helical membrane pass occupies residues 263–283 (FSLGLAGSFAGRIGSGMLPFM). The Cytoplasmic portion of the chain corresponds to 284–285 (TP). A helical transmembrane segment spans residues 286 to 306 (VFLQIGLGFSPFHAGLMMIPM). The Periplasmic portion of the chain corresponds to 307 to 341 (VLGSMGMKRIVVQVVNRFGYRRVLVATTLGLSLVT). The helical transmembrane segment at 342–362 (LLFMTTALLGWYYVLPFVLFL) threads the bilayer. The Cytoplasmic portion of the chain corresponds to 363–395 (QGMVNSTRFSSMNTLTLKDLPDNLASSGNSLLS). The chain crosses the membrane as a helical span at residues 396–416 (MIMQLSMSIGVTIAGLLLGLF). The Periplasmic portion of the chain corresponds to 417-430 (GSQHVSVDSSTTQT). A helical transmembrane segment spans residues 431–451 (VFMYTWLSMAFIIALPAFIFA). The Cytoplasmic segment spans residues 452 to 471 (RVPNDTHQNVAISRRKRSAQ).

The protein belongs to the major facilitator superfamily. TCR/Tet family.

It localises to the cell inner membrane. The chain is Putative multidrug resistance protein MdtD from Escherichia coli O157:H7.